Reading from the N-terminus, the 525-residue chain is GMP synthase [glutamine-hydrolyzing] (525 aa).

The region spanning 9–207 is the Glutamine amidotransferase type-1 domain; the sequence is RILILDFGSQ…ILDICGCEAL (199 aa). Residue C86 is the Nucleophile of the active site. Catalysis depends on residues H181 and E183. One can recognise a GMPS ATP-PPase domain in the interval 208–400; sequence WTPSKIAEDA…LGLPYDMVYR (193 aa). 235-241 is a binding site for ATP; it reads SGGVDSS.

Homodimer.

It catalyses the reaction XMP + L-glutamine + ATP + H2O = GMP + L-glutamate + AMP + diphosphate + 2 H(+). Its pathway is purine metabolism; GMP biosynthesis; GMP from XMP (L-Gln route): step 1/1. In terms of biological role, catalyzes the synthesis of GMP from XMP. This chain is GMP synthase [glutamine-hydrolyzing], found in Pseudomonas fluorescens (strain ATCC BAA-477 / NRRL B-23932 / Pf-5).